The primary structure comprises 100 residues: Urease subunit gamma (100 aa).

The protein belongs to the urease gamma subunit family. As to quaternary structure, heterotrimer of UreA (gamma), UreB (beta) and UreC (alpha) subunits. Three heterotrimers associate to form the active enzyme.

It localises to the cytoplasm. The catalysed reaction is urea + 2 H2O + H(+) = hydrogencarbonate + 2 NH4(+). It participates in nitrogen metabolism; urea degradation; CO(2) and NH(3) from urea (urease route): step 1/1. This is Urease subunit gamma from Clostridium perfringens.